The sequence spans 99 residues: Small ribosomal subunit protein bS18 (99 aa).

Basic and acidic residues predominate over residues 1 to 25 (MAEDHPSVDLDTHLSSPRESEESAP). The interval 1 to 28 (MAEDHPSVDLDTHLSSPRESEESAPKKN) is disordered.

It belongs to the bacterial ribosomal protein bS18 family. As to quaternary structure, part of the 30S ribosomal subunit. Forms a tight heterodimer with protein bS6.

In terms of biological role, binds as a heterodimer with protein bS6 to the central domain of the 16S rRNA, where it helps stabilize the platform of the 30S subunit. The polypeptide is Small ribosomal subunit protein bS18 (Treponema pallidum (strain Nichols)).